Consider the following 733-residue polypeptide: Polyribonucleotide nucleotidyltransferase (733 aa).

Mg(2+) contacts are provided by Asp488 and Asp494. The KH domain occupies 555-614 (PRIEMMTIPVEKIREVIGSGGKVIREIVEQTGAKINIEDDGTIKIASPDTKSIETAKSWI). Residues 624–692 (GTIYQGTVVK…ERGKIRLSMK (69 aa)) enclose the S1 motif domain. Residues 698–733 (TGKEIPQDDLIKTEKEQNPDEKNKSEKKRHNRKKED) form a disordered region. Basic and acidic residues predominate over residues 702-721 (IPQDDLIKTEKEQNPDEKNK). Residues 722 to 733 (SEKKRHNRKKED) show a composition bias toward basic residues.

Belongs to the polyribonucleotide nucleotidyltransferase family. It depends on Mg(2+) as a cofactor.

Its subcellular location is the cytoplasm. The enzyme catalyses RNA(n+1) + phosphate = RNA(n) + a ribonucleoside 5'-diphosphate. Functionally, involved in mRNA degradation. Catalyzes the phosphorolysis of single-stranded polyribonucleotides processively in the 3'- to 5'-direction. This chain is Polyribonucleotide nucleotidyltransferase, found in Bartonella bacilliformis (strain ATCC 35685 / KC583 / Herrer 020/F12,63).